Here is a 274-residue protein sequence, read N- to C-terminus: 2-amino-4,5-dihydroxy-6-oxo-7-(phosphonooxy)heptanoate synthase (274 aa).

This sequence belongs to the DeoC/FbaB aldolase family. GriI subfamily. As to quaternary structure, homodecamer.

The enzyme catalyses 2-amino-4,5-dihydroxy-6-oxo-7-(phosphooxy)heptanoate = L-aspartate 4-semialdehyde + dihydroxyacetone phosphate. Catalyzes aldol condensation between L-aspartate-4-semialdehyde (ASA) and dihydroxyacetone phosphate (DHAP), to form 2-amino-4,5-dihydroxy-6-oxo-7-(phosphonooxy)heptanoate. The sequence is that of 2-amino-4,5-dihydroxy-6-oxo-7-(phosphonooxy)heptanoate synthase (griI) from Streptomyces griseus subsp. griseus (strain JCM 4626 / CBS 651.72 / NBRC 13350 / KCC S-0626 / ISP 5235).